A 97-amino-acid polypeptide reads, in one-letter code: Protein YcgL (97 aa).

The region spanning 1–85 (MLCVIYRSSK…PPEDLLKQHL (85 aa)) is the YcgL domain.

In Escherichia fergusonii (strain ATCC 35469 / DSM 13698 / CCUG 18766 / IAM 14443 / JCM 21226 / LMG 7866 / NBRC 102419 / NCTC 12128 / CDC 0568-73), this protein is Protein YcgL.